Consider the following 420-residue polypeptide: Putative transporter AmpG 3 (420 aa).

12 helical membrane passes run 6-26 (YLIG…LIFF), 41-61 (IVGS…WSPF), 79-99 (GWAL…LKRS), 104-124 (LCIT…QDIV), 141-161 (IAFT…SVGA), 166-186 (IIFG…VGPI), 230-250 (LLLI…PMAM), 274-294 (LLIM…IGIF), 297-317 (VLIG…LATI), 324-344 (FIIT…IISI), 359-381 (YSIS…GICA), and 386-406 (WPVF…IFYI).

The protein belongs to the major facilitator superfamily.

The protein localises to the cell inner membrane. The sequence is that of Putative transporter AmpG 3 (ampG3) from Rickettsia typhi (strain ATCC VR-144 / Wilmington).